The sequence spans 188 residues: Elongation factor P (188 aa).

It belongs to the elongation factor P family.

It localises to the cytoplasm. The protein operates within protein biosynthesis; polypeptide chain elongation. Involved in peptide bond synthesis. Stimulates efficient translation and peptide-bond synthesis on native or reconstituted 70S ribosomes in vitro. Probably functions indirectly by altering the affinity of the ribosome for aminoacyl-tRNA, thus increasing their reactivity as acceptors for peptidyl transferase. The sequence is that of Elongation factor P from Flavobacterium johnsoniae (strain ATCC 17061 / DSM 2064 / JCM 8514 / BCRC 14874 / CCUG 350202 / NBRC 14942 / NCIMB 11054 / UW101) (Cytophaga johnsonae).